Here is a 562-residue protein sequence, read N- to C-terminus: Glucocorticoid modulatory element-binding protein 1 (562 aa).

Residue alanine 2 is modified to N-acetylalanine. The SAND domain occupies 72 to 156 (ASSIEGNEDM…RKMMDSGQID (85 aa)). Position 103 (cysteine 103) interacts with Zn(2+). Residues lysine 129, lysine 133, lysine 136, and arginine 147 each coordinate DNA. Zn(2+) is bound by residues histidine 160, cysteine 164, and cysteine 168. A coiled-coil region spans residues 311-355 (LDNRRKQVEQGEEQFLYTLADLERQLEEQKKQAQDPRLKSQTVQN). The tract at residues 360-384 (PVSTPKPPKRPRLQRPASTTVLSPS) is disordered. The segment covering 375-384 (PASTTVLSPS) has biased composition (polar residues).

As to quaternary structure, homodimer, and heterodimer of GMEB1 and GMEB2. Interacts with TRIM63. Interacts with the glucocorticoid receptor (NR3C1) and NCOA2/TIF2. May interact with HSP27 and CREB-binding protein (CBP). As to expression, ubiquitous. Low levels were detected in heart, brain, spleen, lung, liver, skeletal muscle, kidney and testis.

Its subcellular location is the nucleus. The protein resides in the cytoplasm. Trans-acting factor that binds to glucocorticoid modulatory elements (GME) present in the TAT (tyrosine aminotransferase) promoter and increases sensitivity to low concentrations of glucocorticoids. Also binds to the transferrin receptor promoter. The polypeptide is Glucocorticoid modulatory element-binding protein 1 (Gmeb1) (Mus musculus (Mouse)).